The chain runs to 336 residues: Protein-glutamate methylesterase/protein-glutamine glutaminase 3 (336 aa).

One can recognise a Response regulatory domain in the interval 2 to 119 (KIAIVNDMPM…PNPKEAAAPL (118 aa)). Residue Asp53 is modified to 4-aspartylphosphate. The region spanning 147–336 (PARRDRLVAI…APRLVEVFTQ (190 aa)) is the CheB-type methylesterase domain. Active-site residues include Ser159, His186, and Asp279.

Belongs to the CheB family. Phosphorylated by CheA. Phosphorylation of the N-terminal regulatory domain activates the methylesterase activity.

It localises to the cytoplasm. It catalyses the reaction [protein]-L-glutamate 5-O-methyl ester + H2O = L-glutamyl-[protein] + methanol + H(+). It carries out the reaction L-glutaminyl-[protein] + H2O = L-glutamyl-[protein] + NH4(+). Its function is as follows. Involved in chemotaxis. Part of a chemotaxis signal transduction system that modulates chemotaxis in response to various stimuli. Catalyzes the demethylation of specific methylglutamate residues introduced into the chemoreceptors (methyl-accepting chemotaxis proteins or MCP) by CheR. Also mediates the irreversible deamidation of specific glutamine residues to glutamic acid. The protein is Protein-glutamate methylesterase/protein-glutamine glutaminase 3 of Pseudomonas savastanoi pv. phaseolicola (strain 1448A / Race 6) (Pseudomonas syringae pv. phaseolicola (strain 1448A / Race 6)).